The sequence spans 208 residues: MTADISAAPVAPQMRPLGPLIPASELNIWHSAGDALAAAKRHQQRVRTWARAAYQRERARGYAEGLNTGAEEMSGLIARAVTEVAQRKAVLEKELPQLVIEILSDLLGAFDPGELLVRAVRHAIERRYNGAEEVCLHVCPTQVDMLAREFAGCDGREKRPKVRIEPDPTLSPQECVLWSEYGNVALGLDAQMRALRLGFEYLSEEGEL.

It belongs to the SctL stator family. The core secretion machinery of the T3SS is composed of approximately 20 different proteins, including cytoplasmic components, a base, an export apparatus and a needle. This subunit is part of the cytosolic complex.

The protein resides in the cytoplasm. Its function is as follows. Component of the type III secretion system (T3SS), also called injectisome, which is used to inject bacterial effector proteins into eukaryotic host cells. Acts as a regulator of the HrcN/SctN ATPase activity. This is Type 3 secretion system stator protein from Sinorhizobium fredii (strain NBRC 101917 / NGR234).